A 190-amino-acid chain; its full sequence is Surfactant protein C (190 aa).

A propeptide spanning residues 1-23 (MDVGSKEVLIENPPDYSAAPQGR) is cleaved from the precursor. Cys-28 carries S-palmitoyl cysteine lipidation. Residues 59–190 (HMSQKHTEMV…LCGEVPLYYI (132 aa)) constitute a propeptide that is removed on maturation. The 97-residue stretch at 94 to 190 (FSIGSTGIVV…LCGEVPLYYI (97 aa)) folds into the BRICHOS domain. An intrachain disulfide couples Cys-121 to Cys-182.

The protein resides in the secreted. The protein localises to the extracellular space. It localises to the surface film. Pulmonary surfactant associated proteins promote alveolar stability by lowering the surface tension at the air-liquid interface in the peripheral air spaces. The sequence is that of Surfactant protein C (SFTPC) from Neovison vison (American mink).